The chain runs to 47 residues: DQPVERHAENKRHLIPAVMRAMTMNADRRVQCCRIEFCDEDCGCCYH.

Residues 1 to 31 constitute a propeptide that is removed on maturation; the sequence is DQPVERHAENKRHLIPAVMRAMTMNADRRVQ. Cystine bridges form between Cys32–Cys44, Cys33–Cys42, and Cys38–Cys45. The propeptide occupies 46–47; sequence YH.

Belongs to the conotoxin M superfamily. As to expression, expressed by the venom duct.

It localises to the secreted. This is Conotoxin reg3.11 from Conus regius (Crown cone).